A 359-amino-acid polypeptide reads, in one-letter code: Squamosa promoter-binding-like protein 13A (359 aa).

The tract at residues 75–94 (AKPEGSRSSSSKRTRGNGVG) is disordered. The segment at 98 to 175 (MPICLVDGCD…DGHNRRRRKP (78 aa)) adopts an SBP-type zinc-finger fold. 8 residues coordinate Zn(2+): C101, C106, C123, H126, C142, C145, H149, and C161. Positions 158 to 174 (KRSCRKRLDGHNRRRRK) match the Bipartite nuclear localization signal motif.

It depends on Zn(2+) as a cofactor.

Its subcellular location is the nucleus. Functionally, trans-acting factor that binds specifically to the consensus nucleotide sequence 5'-TNCGTACAA-3'. In Arabidopsis thaliana (Mouse-ear cress), this protein is Squamosa promoter-binding-like protein 13A (SPL13A).